The primary structure comprises 371 residues: Probable trehalose-phosphate phosphatase 1 (371 aa).

Belongs to the trehalose phosphatase family. A divalent metal cation is required as a cofactor. As to expression, expressed in roots and shoots.

The enzyme catalyses alpha,alpha-trehalose 6-phosphate + H2O = alpha,alpha-trehalose + phosphate. It participates in glycan biosynthesis; trehalose biosynthesis. Functionally, removes the phosphate from trehalose 6-phosphate to produce free trehalose. Trehalose accumulation in plant improves abiotic stress tolerance. This is Probable trehalose-phosphate phosphatase 1 (TPP1) from Oryza sativa subsp. japonica (Rice).